Consider the following 615-residue polypeptide: MDETQQLLYKFKNLTISENEKLKLKEKADHFYFNTEKEILTDNEYDILAEQLQSTNVGCSPLISKTDLPLWMGSLDKVYNDKELNLWIKKVASDKYIIQCKLDGVSCLIINKDNKLKAYTRGNGKVGTDISHLIKYFIKDKCLPNNIALRCEIIIKKETFNQKYKHAFSNPRSFVSGVVNRKQENIVISELNDLCLIAYELINFPVNEYQKNILTQIEIIEQLNFIQFVNFKTISNEFLTQKALSNLFKEMKNNSLFEMDGLVILANTPYIRVTEGNPKHSIAFKVRGDNVKEAKVTFIEWNVGKTGVFTPKVHIVPTEINGTTVSCFTGFNANYLIEKGIGEGAIILVTRAGDAIPQIIGVKQTGVLTFPKDYEWKGDCRIVEKIESKERIIKQILHFVESVDIPYIKEATINKLYNNGCTSIELFLKLTQKDLLLFGPKLSSTIYNSIQKSFEAPIEKFLSGYNAFGDYIGEKKILLLLQKYPNLFELENLDAIDLVSIEGIGSKTATQIKQHFINAKLIYNNIIQNKLFKGVLHTPSKQNTVELFKVCVSGTRDPLFIQELKNRGFVLSDNITKKVKVLIVKNSNEETTKVKKANSVGITILTLEDFKQKYF.

Lys-101 (N6-AMP-lysine intermediate) is an active-site residue.

The protein belongs to the NAD-dependent DNA ligase family.

It catalyses the reaction NAD(+) + (deoxyribonucleotide)n-3'-hydroxyl + 5'-phospho-(deoxyribonucleotide)m = (deoxyribonucleotide)n+m + AMP + beta-nicotinamide D-nucleotide.. Its function is as follows. Catalyzes the formation of phosphodiester linkages between 5'-phosphoryl and 3'-hydroxyl groups in double-stranded DNA using NAD as a coenzyme and as the energy source for the reaction. In Invertebrate iridescent virus 6 (IIV-6), this protein is Putative DNA ligase 205R.